We begin with the raw amino-acid sequence, 256 residues long: Small ribosomal subunit protein eS1 (256 aa).

Alanine 2 is subject to N-acetylalanine; partial.

The protein belongs to the eukaryotic ribosomal protein eS1 family. In terms of assembly, component of the small ribosomal subunit. Mature ribosomes consist of a small (40S) and a large (60S) subunit. The 40S subunit contains about 33 different proteins and 1 molecule of RNA (18S). The 60S subunit contains about 49 different proteins and 3 molecules of RNA (25S, 5.8S and 5S).

The protein resides in the cytoplasm. This Lentinula edodes (Shiitake mushroom) protein is Small ribosomal subunit protein eS1.